The sequence spans 335 residues: Foldase protein PrsA (335 aa).

The first 22 residues, 1 to 22 (MRSAKKLLSVLCLGVFILTFTA), serve as a signal peptide directing secretion. The N-palmitoyl cysteine moiety is linked to residue C23. Residue C23 is the site of S-diacylglycerol cysteine attachment. The region spanning 194–285 (PNTMNVSHIL…FGYHIIKINS (92 aa)) is the PpiC domain.

The protein belongs to the PrsA family.

It localises to the cell membrane. The enzyme catalyses [protein]-peptidylproline (omega=180) = [protein]-peptidylproline (omega=0). Functionally, plays a major role in protein secretion by helping the post-translocational extracellular folding of several secreted proteins. In Clostridium botulinum (strain Loch Maree / Type A3), this protein is Foldase protein PrsA.